Here is a 622-residue protein sequence, read N- to C-terminus: Serine/threonine-protein kinase MAK (622 aa).

The 281-residue stretch at 4–284 folds into the Protein kinase domain; the sequence is YTTMRQLGDG…ASQALKHPYF (281 aa). Residues 10–18 and lysine 33 contribute to the ATP site; that span reads LGDGTYGSV. Catalysis depends on aspartate 125, which acts as the Proton acceptor. Threonine 157 carries the phosphothreonine; by autocatalysis modification. Position 159 is a phosphotyrosine; by autocatalysis (tyrosine 159). The tract at residues 301-373 is disordered; it reads QTLHKQLQPP…HHKQPQTMFP (73 aa).

It belongs to the protein kinase superfamily. CMGC Ser/Thr protein kinase family. CDC2/CDKX subfamily. Interacts with RP1. Interacts with AR and CDK20. Found in a complex containing MAK, AR and NCOA3. Interacts with FZR1 (via WD repeats). The cofactor is Mg(2+). Autophosphorylated. Phosphorylated on serine and threonine residues. As to expression, expressed mainly in testicular cells at and after meiosis.

The protein resides in the nucleus. It is found in the cytoplasm. Its subcellular location is the cytoskeleton. It localises to the microtubule organizing center. The protein localises to the centrosome. The protein resides in the spindle. It is found in the midbody. Its subcellular location is the cell projection. It localises to the cilium. The protein localises to the photoreceptor outer segment. The protein resides in the photoreceptor inner segment. It carries out the reaction L-seryl-[protein] + ATP = O-phospho-L-seryl-[protein] + ADP + H(+). The catalysed reaction is L-threonyl-[protein] + ATP = O-phospho-L-threonyl-[protein] + ADP + H(+). Essential for the regulation of ciliary length and required for the long-term survival of photoreceptors. Could play an important function in spermatogenesis. Phosphorylates FZR1 in a cell cycle-dependent manner. Plays a role in the transcriptional coactivation of AR. The chain is Serine/threonine-protein kinase MAK (Mak) from Rattus norvegicus (Rat).